The chain runs to 949 residues: Translation initiation factor IF-2 (949 aa).

3 disordered regions span residues 46 to 82, 145 to 176, and 188 to 361; these read LTAS…EAEA, EPAV…ERAS, and IPIT…KTEL. Residues 152–162 show a composition bias toward low complexity; the sequence is ASPAVTAAKPV. The span at 163-172 shows a compositional bias: pro residues; sequence PATPAAPPQP. Residues 263–276 are compositionally biased toward low complexity; it reads PRDAAAPRPAGARP. Positions 334 to 344 are enriched in basic and acidic residues; sequence SREERQFDPFH. Positions 449–618 constitute a tr-type G domain; sequence ERPPVVTIMG…LLQADLMDLK (170 aa). Residues 458–465 form a G1 region; sequence GHVDHGKT. 458–465 provides a ligand contact to GTP; it reads GHVDHGKT. Positions 483-487 are G2; the sequence is GITQH. The segment at 504–507 is G3; it reads DTPG. GTP is bound by residues 504-508 and 558-561; these read DTPGH and NKID. The interval 558–561 is G4; it reads NKID. The tract at residues 594-596 is G5; the sequence is SAK.

It belongs to the TRAFAC class translation factor GTPase superfamily. Classic translation factor GTPase family. IF-2 subfamily.

It is found in the cytoplasm. Functionally, one of the essential components for the initiation of protein synthesis. Protects formylmethionyl-tRNA from spontaneous hydrolysis and promotes its binding to the 30S ribosomal subunits. Also involved in the hydrolysis of GTP during the formation of the 70S ribosomal complex. The polypeptide is Translation initiation factor IF-2 (Trichlorobacter lovleyi (strain ATCC BAA-1151 / DSM 17278 / SZ) (Geobacter lovleyi)).